Consider the following 44-residue polypeptide: Antibacterial protein 3 homolog (44 aa).

The protein belongs to the staphylococcal hemolytic protein family.

The protein resides in the secreted. Functionally, has hemolytic activity and also inhibits the growth of gonococci. This Staphylococcus haemolyticus (strain JCSC1435) protein is Antibacterial protein 3 homolog.